The sequence spans 316 residues: MLTFQQMILTLQAYWDRQGCALLQPIDLEVGAGTSHVHTFLRAIGPEPWRAAYVQPSRRPKDGRYGENPNRLQHYYQYQVVLKPAPENILVLYLGSLEALGLDLKQNDIRFVEDDWENPTLGAWGLGWEVWLNGMEVTQFTYFQQVGGIDCKPITGEITYGIERLAMYLQKVENVYDLVWTEWVENGETRRLTYGDVYHQNEVEQSTYNFEHSNTEILFRHFAEHEGEAKRLMGNGDGADAAAETGTRLALPAYEQVLKAAHTFNLLDARGAISVTERAAYIGRIRNLSRQVAQAYYDSREALGFPMCGQRDGARA.

This sequence belongs to the class-II aminoacyl-tRNA synthetase family. In terms of assembly, tetramer of two alpha and two beta subunits.

Its subcellular location is the cytoplasm. The enzyme catalyses tRNA(Gly) + glycine + ATP = glycyl-tRNA(Gly) + AMP + diphosphate. The chain is Glycine--tRNA ligase alpha subunit from Cupriavidus taiwanensis (strain DSM 17343 / BCRC 17206 / CCUG 44338 / CIP 107171 / LMG 19424 / R1) (Ralstonia taiwanensis (strain LMG 19424)).